A 1270-amino-acid chain; its full sequence is DNA-directed RNA polymerase subunit beta (1270 aa).

Belongs to the RNA polymerase beta chain family. The RNAP catalytic core consists of 2 alpha, 1 beta, 1 beta' and 1 omega subunit. When a sigma factor is associated with the core the holoenzyme is formed, which can initiate transcription.

It carries out the reaction RNA(n) + a ribonucleoside 5'-triphosphate = RNA(n+1) + diphosphate. DNA-dependent RNA polymerase catalyzes the transcription of DNA into RNA using the four ribonucleoside triphosphates as substrates. The chain is DNA-directed RNA polymerase subunit beta from Christiangramia forsetii (strain DSM 17595 / CGMCC 1.15422 / KT0803) (Gramella forsetii).